The primary structure comprises 1714 residues: Intersectin-1 (1714 aa).

An EH 1 domain is found at 21 to 109 (ERAKHDQQFL…PVMKQQPVAI (89 aa)). The 36-residue stretch at 53 to 88 (LPQPVLAQIWALADMNNDGRMDQVEFSIAMKLIKLK) folds into the EF-hand 1 domain. Ca(2+) is bound by residues D66, N68, D70, R72, and E77. Residue S203 is modified to Phosphoserine. In terms of domain architecture, EH 2 spans 221 to 310 (SRLKYRQLFN…PEYIPPSFRR (90 aa)). One can recognise an EF-hand 2 domain in the interval 254-289 (LPQAQLASIWNLSDIDQDGKLTAEEFILAMHLIDVA). D267, D269, D271, K273, and E278 together coordinate Ca(2+). A compositionally biased stretch (low complexity) spans 310 to 325 (RVRSGSGMSVISSSSV). Disordered regions lie at residues 310–356 (RVRS…KREN) and 614–706 (SKQQ…QSRL). 3 positions are modified to phosphoserine: S318, S334, and S335. Residues 326–702 (DQRLPEEPSS…ERAKPEMQDK (377 aa)) are KLERQ. Basic and acidic residues-rich tracts occupy residues 340–356 (QPEK…KREN) and 622–706 (RSLE…QSRL). A coiled-coil region spans residues 354–658 (RENFERGSVE…QRRVQERDKQ (305 aa)). At S685 the chain carries Phosphoserine. The 62-residue stretch at 738–799 (VKVVYYRALY…PANYAEKIPE (62 aa)) folds into the SH3 1 domain. The tract at residues 827–863 (APLPVTSSEPSTTPNNWADFSSTWPSSSNEKPETDNW) is disordered. Over residues 831-855 (VTSSEPSTTPNNWADFSSTWPSSSN) the composition is skewed to polar residues. At T890 the chain carries Phosphothreonine. A phosphoserine mark is found at S894, S895, and S897. In terms of domain architecture, SH3 2 spans 906-964 (VEGLQAQALYPWRAKKDNHLNFNKSDVITVLEQQDMWWFGEVQGQKGWFPKSYVKLISG). S971 carries the phosphoserine modification. T977 carries the post-translational modification Phosphothreonine. Phosphoserine is present on residues S979 and S988. SH3 domains are found at residues 995 to 1053 (IPGE…LKDS) and 1067 to 1131 (KKPE…LLSP). The segment at 1067–1131 (KKPEIAQVIA…PANYVKLLSP (65 aa)) is required for interaction with FCHSD2. Residues 1097-1120 (RKKNPGGWWEGELQARGKKRQIGW) carry the Bipartite nuclear localization signal; in isoform 2 motif. Position 1130 is a phosphoserine (S1130). T1137 bears the Phosphothreonine mark. In terms of domain architecture, SH3 5 spans 1148 to 1207 (PAVCQVIGMYDYTAQNDDELAFSKGQIINVLNKEDPDWWKGEVSGQVGLFPSNYVKLTTD). Residues 1230–1416 (KRQGYIHELI…EELCSQVNEG (187 aa)) form the DH domain. The 110-residue stretch at 1455-1564 (KFLHSGKLYK…WVQKIKAASE (110 aa)) folds into the PH domain. In terms of domain architecture, C2 spans 1572 to 1688 (KKREKAYLVR…KKDQGSKGPV (117 aa)). S1638 is modified (phosphoserine). Positions 1660, 1663, and 1666 each coordinate Ca(2+).

In terms of assembly, interacts (via DH domain) with CDC42. Interacts (via SH3 domain 1) with WASL. Interacts with dynamin, SNAP25 and SNAP23. Interacts with clathrin-associated proteins and other components of the endocytic machinery, such as SPIN90, EPS15, EPN1, EPN2, STON2, FCHO1, FCHO2 and DAB2. Interacts (via SH3 domains) with REPS1 and SGIP1. Interacts with ARHGAP31. Interacts with ADAM15. Interacts with PRRT2. Interacts (via SH3 domain 4) with FCHSD2 (via SH3 domain 2). Interacts (via SH3 domain 1) with DENND2B. Interacts (via SH3 domains) with CBL. Isoform 2: Interacts with CBL and DNM1. Isoform 2: Interacts with LMNA. Isoform 2: Interacts with importin subunit KPNA1; this is likely to mediate its import into the nucleus. Interacts with DNM2. The cofactor is Ca(2+). As to expression, detected in brain, adrenal gland and heart. Detected in neurons at the calyx of Held (at protein level). Isoform 1: Primarily detected in brain neurons. Isoform 2: Primarily detected in glia (at protein level). Widely expressed. Expressed at high levels in brain, heart and skeletal muscle.

The protein resides in the endomembrane system. It is found in the synapse. Its subcellular location is the synaptosome. The protein localises to the cell projection. It localises to the lamellipodium. The protein resides in the cell membrane. It is found in the membrane. Its subcellular location is the clathrin-coated pit. The protein localises to the recycling endosome. It localises to the endosome. The protein resides in the cytoplasmic vesicle. It is found in the cytoplasm. Its subcellular location is the nucleus envelope. Its function is as follows. Adapter protein that provides a link between the endocytic membrane traffic and the actin assembly machinery. Acts as a guanine nucleotide exchange factor (GEF) for CDC42, and thereby stimulates actin nucleation mediated by WASL and the ARP2/3 complex. Plays a role in the assembly and maturation of clathrin-coated vesicles. Recruits FCHSD2 to clathrin-coated pits. Involved in endocytosis of activated EGFR, and probably also other growth factor receptors. Involved in endocytosis of integrin beta-1 (ITGB1) and transferrin receptor (TFR); internalization of ITGB1 as DAB2-dependent cargo but not TFR may involve association with DAB2. Promotes ubiquitination and subsequent degradation of EGFR, and thereby contributes to the down-regulation of EGFR-dependent signaling pathways. In chromaffin cells, required for normal exocytosis of catecholamines. Required for rapid replenishment of release-ready synaptic vesicles at presynaptic active zones. Inhibits ARHGAP31 activity toward RAC1. In terms of biological role, plays a role in synaptic vesicle endocytosis in brain neurons. The protein is Intersectin-1 of Mus musculus (Mouse).